We begin with the raw amino-acid sequence, 234 residues long: Small ribosomal subunit protein uS2 (234 aa).

Belongs to the universal ribosomal protein uS2 family.

In Prochlorococcus marinus subsp. pastoris (strain CCMP1986 / NIES-2087 / MED4), this protein is Small ribosomal subunit protein uS2.